Reading from the N-terminus, the 542-residue chain is Chaperonin GroEL 2 (542 aa).

ATP-binding positions include 30-33, Lys-51, 87-91, Gly-415, and Asp-496; these read TLGP and DGTTT.

It belongs to the chaperonin (HSP60) family. As to quaternary structure, forms a cylinder of 14 subunits composed of two heptameric rings stacked back-to-back. Interacts with the co-chaperonin GroES.

It localises to the cytoplasm. It carries out the reaction ATP + H2O + a folded polypeptide = ADP + phosphate + an unfolded polypeptide.. Together with its co-chaperonin GroES, plays an essential role in assisting protein folding. The GroEL-GroES system forms a nano-cage that allows encapsulation of the non-native substrate proteins and provides a physical environment optimized to promote and accelerate protein folding. The chain is Chaperonin GroEL 2 from Mesorhizobium japonicum (strain LMG 29417 / CECT 9101 / MAFF 303099) (Mesorhizobium loti (strain MAFF 303099)).